The sequence spans 352 residues: Protein-glutamate methylesterase/protein-glutamine glutaminase (352 aa).

The 118-residue stretch at 4-121 folds into the Response regulatory domain; that stretch reads RVLIVDDSAT…YDGIDEIQKE (118 aa). Asp55 carries the 4-aspartylphosphate modification. Residues 159–351 form the CheB-type methylesterase domain; it reads AQTTNKLIAI…VKIASLLSER (193 aa). Residues Ser171, His197, and Asp293 contribute to the active site.

It belongs to the CheB family. Post-translationally, phosphorylated by CheA. Phosphorylation of the N-terminal regulatory domain activates the methylesterase activity.

The protein resides in the cytoplasm. The enzyme catalyses [protein]-L-glutamate 5-O-methyl ester + H2O = L-glutamyl-[protein] + methanol + H(+). It catalyses the reaction L-glutaminyl-[protein] + H2O = L-glutamyl-[protein] + NH4(+). Involved in chemotaxis. Part of a chemotaxis signal transduction system that modulates chemotaxis in response to various stimuli. Catalyzes the demethylation of specific methylglutamate residues introduced into the chemoreceptors (methyl-accepting chemotaxis proteins or MCP) by CheR. Also mediates the irreversible deamidation of specific glutamine residues to glutamic acid. The chain is Protein-glutamate methylesterase/protein-glutamine glutaminase from Sulfurimonas denitrificans (strain ATCC 33889 / DSM 1251) (Thiomicrospira denitrificans (strain ATCC 33889 / DSM 1251)).